Here is a 227-residue protein sequence, read N- to C-terminus: Phosphoribosylformylglycinamidine synthase subunit PurQ (227 aa).

In terms of domain architecture, Glutamine amidotransferase type-1 spans 3–227 (SSVITFPGSN…FFQNLINNLK (225 aa)). Catalysis depends on cysteine 85, which acts as the Nucleophile. Active-site residues include histidine 201 and glutamate 203.

As to quaternary structure, part of the FGAM synthase complex composed of 1 PurL, 1 PurQ and 2 PurS subunits.

The protein resides in the cytoplasm. The catalysed reaction is N(2)-formyl-N(1)-(5-phospho-beta-D-ribosyl)glycinamide + L-glutamine + ATP + H2O = 2-formamido-N(1)-(5-O-phospho-beta-D-ribosyl)acetamidine + L-glutamate + ADP + phosphate + H(+). It catalyses the reaction L-glutamine + H2O = L-glutamate + NH4(+). Its pathway is purine metabolism; IMP biosynthesis via de novo pathway; 5-amino-1-(5-phospho-D-ribosyl)imidazole from N(2)-formyl-N(1)-(5-phospho-D-ribosyl)glycinamide: step 1/2. In terms of biological role, part of the phosphoribosylformylglycinamidine synthase complex involved in the purines biosynthetic pathway. Catalyzes the ATP-dependent conversion of formylglycinamide ribonucleotide (FGAR) and glutamine to yield formylglycinamidine ribonucleotide (FGAM) and glutamate. The FGAM synthase complex is composed of three subunits. PurQ produces an ammonia molecule by converting glutamine to glutamate. PurL transfers the ammonia molecule to FGAR to form FGAM in an ATP-dependent manner. PurS interacts with PurQ and PurL and is thought to assist in the transfer of the ammonia molecule from PurQ to PurL. The sequence is that of Phosphoribosylformylglycinamidine synthase subunit PurQ from Pelagibacter ubique (strain HTCC1062).